The following is a 129-amino-acid chain: Ribonuclease VapC12 (129 aa).

Residues Asp5 and Asp94 each contribute to the Mg(2+) site.

This sequence belongs to the PINc/VapC protein family. Mg(2+) serves as cofactor.

Toxic component of a type II toxin-antitoxin (TA) system. An RNase. The cognate antitoxin is VapB12. This is Ribonuclease VapC12 from Mycobacterium tuberculosis (strain CDC 1551 / Oshkosh).